A 686-amino-acid chain; its full sequence is Translation initiation factor IF-2 (686 aa).

Residues 61-98 (FEVEEKVVRSKKNSNKKKKKGKGNEDKRQENFAGRQQT) form a disordered region. Over residues 69–81 (RSKKNSNKKKKKG) the composition is skewed to basic residues. The tr-type G domain maps to 188-357 (ERPAVVTIMG…LLVSEVEEYK (170 aa)). Residues 197–204 (GHVDHGKT) form a G1 region. 197–204 (GHVDHGKT) provides a ligand contact to GTP. The interval 222–226 (GITQH) is G2. Residues 243–246 (DTPG) are G3. Residues 243–247 (DTPGH) and 297–300 (NKMD) each bind GTP. Residues 297 to 300 (NKMD) form a G4 region. The interval 333-335 (SAI) is G5.

It belongs to the TRAFAC class translation factor GTPase superfamily. Classic translation factor GTPase family. IF-2 subfamily.

The protein resides in the cytoplasm. One of the essential components for the initiation of protein synthesis. Protects formylmethionyl-tRNA from spontaneous hydrolysis and promotes its binding to the 30S ribosomal subunits. Also involved in the hydrolysis of GTP during the formation of the 70S ribosomal complex. The chain is Translation initiation factor IF-2 from Bacillus cereus (strain B4264).